The following is a 274-amino-acid chain: Thiamine kinase (274 aa).

It belongs to the thiamine kinase family.

It carries out the reaction thiamine + ATP = thiamine phosphate + ADP + H(+). The protein operates within cofactor biosynthesis; thiamine diphosphate biosynthesis; thiamine phosphate from thiamine: step 1/1. Its function is as follows. Catalyzes the ATP-dependent phosphorylation of thiamine to thiamine phosphate. Is involved in thiamine salvage. The protein is Thiamine kinase of Salmonella dublin (strain CT_02021853).